The primary structure comprises 732 residues: Zinc/cadmium/lead-transporting P-type ATPase (732 aa).

Over methionine 1–arginine 124 the chain is Cytoplasmic. The 65-residue stretch at threonine 48–arginine 112 folds into the HMA domain. 3 residues coordinate Zn(2+): aspartate 58, cysteine 59, and cysteine 62. Residues leucine 125–glutamate 145 form a helical membrane-spanning segment. A topological domain (periplasmic) is located at residue glutamine 146. A helical transmembrane segment spans residues phenylalanine 147–isoleucine 167. The Cytoplasmic segment spans residues alanine 168–serine 179. A helical transmembrane segment spans residues tyrosine 180–isoleucine 197. Residues glycine 198 to glutamate 202 lie on the Periplasmic side of the membrane. Residues alanine 203–serine 222 form a helical membrane-spanning segment. Residues arginine 223–proline 356 are Cytoplasmic-facing. A helical membrane pass occupies residues alanine 357–tryptophan 377. Over glutamine 378 to lysine 383 the chain is Periplasmic. Residues glycine 384–isoleucine 404 traverse the membrane as a helical segment. Residues cysteine 392 and cysteine 394 each coordinate Zn(2+). Residues threonine 405–asparagine 685 lie on the Cytoplasmic side of the membrane. The 4-aspartylphosphate intermediate role is filled by aspartate 436. Residues aspartate 436, threonine 438, and aspartate 628 each contribute to the Mg(2+) site. A helical transmembrane segment spans residues isoleucine 686–leucine 702. Over glycine 703–leucine 707 the chain is Periplasmic. A helical transmembrane segment spans residues tryptophan 708 to leucine 729. Residue aspartate 714 participates in Zn(2+) binding. Topologically, residues arginine 730 to arginine 732 are cytoplasmic.

The protein belongs to the cation transport ATPase (P-type) (TC 3.A.3) family. Type IB subfamily.

It localises to the cell inner membrane. It carries out the reaction Pb(2+)(in) + ATP + H2O = Pb(2+)(out) + ADP + phosphate + H(+). The enzyme catalyses Zn(2+)(in) + ATP + H2O = Zn(2+)(out) + ADP + phosphate + H(+). It catalyses the reaction Cd(2+)(in) + ATP + H2O = Cd(2+)(out) + ADP + phosphate + H(+). With respect to regulation, inhibited by orthovanadate. Functionally, confers resistance to zinc, cadmium and lead. Couples the hydrolysis of ATP with the export of zinc, cadmium or lead, with highest activity when the metals are present as metal-thiolate complexes. Can also bind nickel, copper, cobalt and mercury. This is Zinc/cadmium/lead-transporting P-type ATPase from Escherichia coli (strain K12).